Consider the following 344-residue polypeptide: Probable dual-specificity RNA methyltransferase RlmN (344 aa).

The active-site Proton acceptor is Glu90. A Radical SAM core domain is found at 96–326; that stretch reads YKYGNAICIS…VTIRRELGSS (231 aa). Cys103 and Cys331 are joined by a disulfide. Residues Cys110, Cys114, and Cys117 each contribute to the [4Fe-4S] cluster site. S-adenosyl-L-methionine contacts are provided by residues 157-158, Ser189, 212-214, and Asn288; these read GE and SLH. Cys331 acts as the S-methylcysteine intermediate in catalysis.

The protein belongs to the radical SAM superfamily. RlmN family. [4Fe-4S] cluster serves as cofactor.

It localises to the cytoplasm. It catalyses the reaction adenosine(2503) in 23S rRNA + 2 reduced [2Fe-2S]-[ferredoxin] + 2 S-adenosyl-L-methionine = 2-methyladenosine(2503) in 23S rRNA + 5'-deoxyadenosine + L-methionine + 2 oxidized [2Fe-2S]-[ferredoxin] + S-adenosyl-L-homocysteine. The catalysed reaction is adenosine(37) in tRNA + 2 reduced [2Fe-2S]-[ferredoxin] + 2 S-adenosyl-L-methionine = 2-methyladenosine(37) in tRNA + 5'-deoxyadenosine + L-methionine + 2 oxidized [2Fe-2S]-[ferredoxin] + S-adenosyl-L-homocysteine. Specifically methylates position 2 of adenine 2503 in 23S rRNA and position 2 of adenine 37 in tRNAs. The protein is Probable dual-specificity RNA methyltransferase RlmN of Caldicellulosiruptor saccharolyticus (strain ATCC 43494 / DSM 8903 / Tp8T 6331).